We begin with the raw amino-acid sequence, 307 residues long: Transaldolase (307 aa).

Residue Lys-125 is the Schiff-base intermediate with substrate of the active site.

It belongs to the transaldolase family. Type 1 subfamily. Homodimer.

It localises to the cytoplasm. The enzyme catalyses D-sedoheptulose 7-phosphate + D-glyceraldehyde 3-phosphate = D-erythrose 4-phosphate + beta-D-fructose 6-phosphate. It participates in carbohydrate degradation; pentose phosphate pathway; D-glyceraldehyde 3-phosphate and beta-D-fructose 6-phosphate from D-ribose 5-phosphate and D-xylulose 5-phosphate (non-oxidative stage): step 2/3. Transaldolase is important for the balance of metabolites in the pentose-phosphate pathway. The chain is Transaldolase from Pseudomonas paraeruginosa (strain DSM 24068 / PA7) (Pseudomonas aeruginosa (strain PA7)).